The sequence spans 885 residues: Putative membrane protein YdgH (885 aa).

The next 7 membrane-spanning stretches (helical) occupy residues 9 to 29 (WAIAAIVLALTVVLSLFSPNL), 181 to 201 (IIGLLLIVFRSVVTPFIPIVV), 202 to 222 (VGFSYLISQSILGILVYNVDF), 227 to 247 (FTQTFLVAILFGIGTDYCILL), 278 to 298 (ISGFAVLIGFSALGFAKFAIF), 304 to 324 (VAVGVGILMIILYTLLPLFMV), and 354 to 374 (VARPFLFIVITVVITLPFILT). The disordered stretch occupies residues 498-518 (MAGQTGSASNGGSGGSLGDAA). Helical transmembrane passes span 716-736 (MVIMIIGLFIVLTILFRSMIM), 740-760 (MIASLLLTYYTSISITELIFV), 772-792 (VPFFSFVILIALGVDYSIFLL), 817-837 (VIITAAIILAGTFAAMMPSGV), and 847-867 (IIIGLLLYGLVILPLFIPAII).

It belongs to the resistance-nodulation-cell division (RND) (TC 2.A.6) family. MmpL subfamily.

The protein localises to the cell membrane. The polypeptide is Putative membrane protein YdgH (ydgH) (Bacillus subtilis (strain 168)).